We begin with the raw amino-acid sequence, 210 residues long: HTH-type transcriptional repressor FabR (210 aa).

Positions 10–70 (KTRRSLVEAA…TMVDESGLML (61 aa)) constitute an HTH tetR-type domain. The H-T-H motif DNA-binding region spans 33–52 (SLREVAREAGIAPTSFYRHF).

As to quaternary structure, homodimer.

The protein resides in the cytoplasm. Represses the transcription of fabB, involved in unsaturated fatty acid (UFA) biosynthesis. By controlling UFA production, FabR directly influences the physical properties of the membrane bilayer. This chain is HTH-type transcriptional repressor FabR, found in Klebsiella pneumoniae subsp. pneumoniae (strain ATCC 700721 / MGH 78578).